A 117-amino-acid polypeptide reads, in one-letter code: MSSEIPPQVQNQLAQLQQVQQQAQALAMQKNQMESMKKESEMALEELEKLSDDAIVYRAVGDLQIQSNKDDTVAKLKERLETLSLRLQSITRQEERISKRFTQLQEQLKQAMGTQGQ.

The protein belongs to the prefoldin subunit beta family. As to quaternary structure, heterohexamer of two alpha and four beta subunits.

It localises to the cytoplasm. In terms of biological role, molecular chaperone capable of stabilizing a range of proteins. Seems to fulfill an ATP-independent, HSP70-like function in archaeal de novo protein folding. This chain is Prefoldin subunit beta, found in Methanococcoides burtonii (strain DSM 6242 / NBRC 107633 / OCM 468 / ACE-M).